The sequence spans 365 residues: Uroporphyrinogen decarboxylase (365 aa).

Substrate contacts are provided by residues 27 to 31, aspartate 77, tyrosine 154, threonine 209, and histidine 327; that span reads RQAGR.

This sequence belongs to the uroporphyrinogen decarboxylase family. Homodimer.

Its subcellular location is the cytoplasm. It carries out the reaction uroporphyrinogen III + 4 H(+) = coproporphyrinogen III + 4 CO2. The protein operates within porphyrin-containing compound metabolism; protoporphyrin-IX biosynthesis; coproporphyrinogen-III from 5-aminolevulinate: step 4/4. Catalyzes the decarboxylation of four acetate groups of uroporphyrinogen-III to yield coproporphyrinogen-III. This chain is Uroporphyrinogen decarboxylase, found in Nitrosospira multiformis (strain ATCC 25196 / NCIMB 11849 / C 71).